The following is a 142-amino-acid chain: uncharacterized protein (142 aa).

The next 3 membrane-spanning stretches (helical) occupy residues Leu3 to Leu23, Ser30 to Ile50, and Phe91 to Ser111.

It is found in the membrane. This is an uncharacterized protein from Saccharomyces cerevisiae (strain ATCC 204508 / S288c) (Baker's yeast).